The primary structure comprises 811 residues: E3 ubiquitin-protein ligase RNF10 (811 aa).

Residues 1-10 (MPLSSPNAAA) are compositionally biased toward polar residues. Residues 1 to 119 (MPLSSPNAAA…SFNGGRRDEV (119 aa)) are disordered. Serine 5 bears the Phosphoserine mark. Low complexity-rich tracts occupy residues 18–31 (NSGS…SGSS), 78–90 (NNQS…QKSK), and 104–113 (SKLFSSSFNG). Residues 101-185 (GGSSKLFSSS…FNKELFLQAN (85 aa)) form an interaction with MEOX2 region. A phosphoserine mark is found at serine 110 and serine 128. Residues 225–267 (CPICLYPPTAAKITRCGHIFCWACILHYLSLSEKTWSKCPICY) form an RING-type zinc finger. A compositionally biased stretch (polar residues) spans 653–662 (DSALGPTSTE). Disordered regions lie at residues 653-672 (DSAL…ISPL), 724-761 (DVWP…VPSF), and 776-811 (LDTP…VHTK). The segment covering 724–736 (DVWPKTAPKKDEN) has biased composition (basic and acidic residues). Polar residues predominate over residues 802–811 (LFSTSVVHTK).

This sequence belongs to the RNF10 family. As to quaternary structure, interacts with MEOX2.

It localises to the cytoplasm. It is found in the nucleus. It catalyses the reaction S-ubiquitinyl-[E2 ubiquitin-conjugating enzyme]-L-cysteine + [acceptor protein]-L-lysine = [E2 ubiquitin-conjugating enzyme]-L-cysteine + N(6)-ubiquitinyl-[acceptor protein]-L-lysine.. The protein operates within protein modification; protein ubiquitination. Functionally, E3 ubiquitin-protein ligase that catalyzes monoubiquitination of 40S ribosomal proteins RPS2/us5 and RPS3/us3 in response to ribosome stalling. Part of a ribosome quality control that takes place when ribosomes have stalled during translation initiation (iRQC): RNF10 acts by mediating monoubiquitination of RPS2/us5 and RPS3/us3, promoting their degradation by the proteasome. Also promotes ubiquitination of 40S ribosomal proteins in response to ribosome stalling during translation elongation. The action of RNF10 in iRQC is counteracted by USP10. May also act as a transcriptional factor involved in the regulation of MAG (Myelin-associated glycoprotein) expression. Acts as a regulator of Schwann cell differentiation and myelination. The chain is E3 ubiquitin-protein ligase RNF10 from Homo sapiens (Human).